Here is a 297-residue protein sequence, read N- to C-terminus: 4-hydroxy-tetrahydrodipicolinate synthase (297 aa).

A pyruvate-binding site is contributed by Thr47. Tyr135 acts as the Proton donor/acceptor in catalysis. Lys163 serves as the catalytic Schiff-base intermediate with substrate. Ile205 contributes to the pyruvate binding site.

It belongs to the DapA family. As to quaternary structure, homotetramer; dimer of dimers.

It is found in the cytoplasm. It catalyses the reaction L-aspartate 4-semialdehyde + pyruvate = (2S,4S)-4-hydroxy-2,3,4,5-tetrahydrodipicolinate + H2O + H(+). It functions in the pathway amino-acid biosynthesis; L-lysine biosynthesis via DAP pathway; (S)-tetrahydrodipicolinate from L-aspartate: step 3/4. In terms of biological role, catalyzes the condensation of (S)-aspartate-beta-semialdehyde [(S)-ASA] and pyruvate to 4-hydroxy-tetrahydrodipicolinate (HTPA). This Cytophaga hutchinsonii (strain ATCC 33406 / DSM 1761 / CIP 103989 / NBRC 15051 / NCIMB 9469 / D465) protein is 4-hydroxy-tetrahydrodipicolinate synthase.